A 494-amino-acid polypeptide reads, in one-letter code: Glutamyl-tRNA(Gln) amidotransferase subunit A (494 aa).

Active-site charge relay system residues include K79 and S159. S183 (acyl-ester intermediate) is an active-site residue.

Belongs to the amidase family. GatA subfamily. Heterotrimer of A, B and C subunits.

The enzyme catalyses L-glutamyl-tRNA(Gln) + L-glutamine + ATP + H2O = L-glutaminyl-tRNA(Gln) + L-glutamate + ADP + phosphate + H(+). Its function is as follows. Allows the formation of correctly charged Gln-tRNA(Gln) through the transamidation of misacylated Glu-tRNA(Gln) in organisms which lack glutaminyl-tRNA synthetase. The reaction takes place in the presence of glutamine and ATP through an activated gamma-phospho-Glu-tRNA(Gln). This chain is Glutamyl-tRNA(Gln) amidotransferase subunit A, found in Bartonella bacilliformis (strain ATCC 35685 / KC583 / Herrer 020/F12,63).